Consider the following 130-residue polypeptide: Small ribosomal subunit protein uS9 (130 aa).

This sequence belongs to the universal ribosomal protein uS9 family.

This is Small ribosomal subunit protein uS9 from Nitratidesulfovibrio vulgaris (strain ATCC 29579 / DSM 644 / CCUG 34227 / NCIMB 8303 / VKM B-1760 / Hildenborough) (Desulfovibrio vulgaris).